The sequence spans 607 residues: Fucose-1-phosphate guanylyltransferase (607 aa).

The tract at residues 1-21 is disordered; that stretch reads MRAVRRGLREGGAMAAARDPP.

In terms of tissue distribution, expressed in many tissues.

Its subcellular location is the cytoplasm. The enzyme catalyses beta-L-fucose 1-phosphate + GTP + H(+) = GDP-beta-L-fucose + diphosphate. In terms of biological role, catalyzes the formation of GDP-L-fucose from GTP and L-fucose-1-phosphate. Functions as a salvage pathway to reutilize L-fucose arising from the turnover of glycoproteins and glycolipids. The chain is Fucose-1-phosphate guanylyltransferase from Homo sapiens (Human).